Consider the following 221-residue polypeptide: Pectate lyase C (221 aa).

The signal sequence occupies residues 1–27 (MKKIVSILFMFGLVMGFSQFQPSTVFA).

This sequence belongs to the polysaccharide lyase 3 family. Ca(2+) serves as cofactor.

Its subcellular location is the secreted. It carries out the reaction Eliminative cleavage of (1-&gt;4)-alpha-D-galacturonan to give oligosaccharides with 4-deoxy-alpha-D-galact-4-enuronosyl groups at their non-reducing ends.. The enzyme catalyses Eliminative cleavage of (1-&gt;4)-alpha-D-galacturonan methyl ester to give oligosaccharides with 4-deoxy-6-O-methyl-alpha-D-galact-4-enuronosyl groups at their non-reducing ends.. It participates in glycan metabolism; pectin degradation; 2-dehydro-3-deoxy-D-gluconate from pectin: step 2/5. Catalyzes the depolymerization of both polygalacturonate and pectins of methyl esterification degree from 22 to 89%, with an endo mode of action. In contrast to the majority of pectate lyases, displays high activity on highly methylated pectins. Is also able to cleave trigalacturonate to galacturonic acid and unsaturated digalacturonate. In Bacillus subtilis (strain 168), this protein is Pectate lyase C (pelC).